Reading from the N-terminus, the 106-residue chain is Ferredoxin-2 (106 aa).

4Fe-4S ferredoxin-type domains are found at residues 2–29 (YVVT…YEGE) and 30–59 (NFLV…GKWL). [3Fe-4S] cluster is bound by residues Cys8 and Cys16. Cys20, Cys39, Cys42, and Cys45 together coordinate [4Fe-4S] cluster. Residue Cys49 participates in [3Fe-4S] cluster binding. Residues 80–106 (ADADDWKDKPDKTGLLSENPGKGTVCH) are disordered.

The cofactor is [4Fe-4S] cluster. [3Fe-4S] cluster serves as cofactor.

Its function is as follows. Ferredoxins are iron-sulfur proteins that transfer electrons in a wide variety of metabolic reactions. The polypeptide is Ferredoxin-2 (Rhodospirillum rubrum).